A 277-amino-acid chain; its full sequence is Probable CCR4-associated factor 1 homolog 10 (277 aa).

Residues D40, E42, D166, and D235 each coordinate a divalent metal cation.

It belongs to the CAF1 family. As to quaternary structure, component of the CCR4-NOT complex, at least composed of CRR4 and CAF1 proteins. A divalent metal cation serves as cofactor.

The protein resides in the nucleus. It localises to the cytoplasm. It catalyses the reaction Exonucleolytic cleavage of poly(A) to 5'-AMP.. Its function is as follows. Ubiquitous transcription factor required for a diverse set of processes. It is a component of the CCR4 complex involved in the control of gene expression. This Arabidopsis thaliana (Mouse-ear cress) protein is Probable CCR4-associated factor 1 homolog 10 (CAF1-10).